We begin with the raw amino-acid sequence, 287 residues long: MLYLAKMRNAEGELTENEQKIASFLLAHVSELKTVSSRNLAKQLEVSQSSIVKFAQKLGAKGFTELRMALIEEYSVNREKKHDTALHLHSTITSEDSLEVIARKLNREKMFALEETCSLMDFDRLKQVINLISKARLIQITGVGGSALVGRDLSFKLMKIGYRVACEVDTHVQATIAQALQEGDVQIAISYSGSKKEIVLCAEAARKQGATVIAITSLTDSPLRRLADYTLDTVSGETEWRSSSMSTRTAQNSVTDLLFVGMVQLNDVESLRMIERSSELINLLGRS.

One can recognise an HTH rpiR-type domain in the interval 1–77 (MLYLAKMRNA…MALIEEYSVN (77 aa)). Residues 37–56 (SRNLAKQLEVSQSSIVKFAQ) constitute a DNA-binding region (H-T-H motif). The 141-residue stretch at 128-268 (VINLISKARL…FVGMVQLNDV (141 aa)) folds into the SIS domain.

Homotetramer.

It functions in the pathway amino-sugar metabolism; N-acetylmuramate degradation [regulation]. In terms of biological role, represses the expression of the murPQ operon involved in the uptake and degradation of N-acetylmuramic acid (MurNAc). Binds to two adjacent inverted repeats within the operator region. MurNAc 6-phosphate, the substrate of MurQ, is the specific inducer that weakens binding of MurR to the operator. The polypeptide is HTH-type transcriptional regulator MurR (Citrobacter koseri (strain ATCC BAA-895 / CDC 4225-83 / SGSC4696)).